We begin with the raw amino-acid sequence, 1040 residues long: MQPEEGTGWLLELLSEVQLQQYFLRLRDDLNITRLSHFEYVKNEDLEKIGMGRPGQRRLWEAVKRRKAMCKRKSWMSKVFSGKRQEAEFPSHHSQSTFRKPSPTPGGLAGEGTLQSLTCLIGEKDLRLLEKLGDGSFGVVRRGEWDAPAGKTVSVAVKCLKPDVLSQPEAMDDFIREVNAMHSLDHRNLIRLYGVVLTPPMKMVTELAPLGSLLDRLRKHQGHFLLGTLSRYAVQVAEGMGYLESKRFIHRDLAARNLLLATRDLVKIGDFGLMRALPQNDGHYVMQEHRKVPFAWCAPESLKTRTFSHASDTWMFGVTLWEMFTYGQEPWIGLNGSQILHKIDKEGERLPRPEDCPQDIYNVMVQCWAHKPEDRPTFVALRDFLLEAQPTDMRALQDFEEPDKLHIQMNDVITVIEGRAENYWWRGQNTRTLCVGPFPRNVVTSVAGLSAQDISQPLQNSFIHTGHGDSDPRHCWGFPDRIDELYLGNPMDPPDLLSVELSTSRPTQHLGRMKKPTYDPVSEDPDPLSSDFKRLGLRKPALPRGLWLAKPSARVPGTKAGRSSGGEVTLIDFGEEPVAPTPRPCAPSLAQLAMDACSLLDKTPPQSPTRALPRPLHPTPVVDWDARPLPPPPAYDDVAQDEDDFEVCSINSTLVSAGLPTGPSQGETNYAFVPEQAQLPPALEDNLFLPPQGGGQPPSSAQTAEIFQALQQECMRQLQVPTGQLTPSPTPGGDDKPQVPPRVPIPPRPTRPRVGLSPAPLGEEEASRWPGPSSPPRVPPREPLSPQGSRTPSPLVPPGSSPLPHRLSSSPGKTMPTTQSFASDPKYATPQVIQAPGPRAGPCILPIVRDGRKVSSTHYYLLPERPPYLERYQRFLREAQSPEEPAALPVPPLLPPPSTPAPAAPTATVRPMPQAAPDPKANFSTNNSNPGAQPPSLRASARLPQRGCPGDGQEAARPADKVQMLQAMVHGVTTEECQAALRSHSWSIQRAAQYLKVEQLFGLGLRPRVECHKVLEMFDWNLEQAGCHLLGSCGPAHHKR.

The tract at residues M1–G110 is SAM-like domain. The disordered stretch occupies residues E86–A109. At T113 the chain carries Phosphothreonine. Positions L126–L385 constitute a Protein kinase domain. Residues L132 to V140 and K158 each bind ATP. Residue D252 is the Proton acceptor of the active site. Y284 carries the post-translational modification Phosphotyrosine; by SRC and autocatalysis. Positions A388–G448 constitute an SH3 domain. The interval R505–P527 is disordered. Y518 carries the phosphotyrosine modification. Residues D623–S652 are required for interaction with SRC. The interval P632–Y635 is required for interaction with NEDD4. The tract at residues T722 to D824 is disordered. The interval G733–L876 is EBD domain. 2 stretches are compositionally biased toward pro residues: residues Q738–P749 and P772–P783. Over residues P802–G812 the composition is skewed to low complexity. Y827 is modified (phosphotyrosine). R839 is subject to Omega-N-methylarginine. Phosphotyrosine is present on residues Y859 and Y872. Residue S881 is modified to Phosphoserine. Residues S881–R957 form a disordered region. A compositionally biased stretch (pro residues) spans L888–A903. Residues N922–G931 are compositionally biased toward polar residues. Positions P958–E998 constitute a UBA domain.

The protein belongs to the protein kinase superfamily. Tyr protein kinase family. Homodimer. Interacts with CDC42. Interacts with CSPG4 (activated). Interacts with MERTK (activated); stimulates autophosphorylation. May interact (phosphorylated) with HSP90AB1; maintains kinase activity. Interacts with NPHP1. Interacts with SNX9 (via SH3 domain). Interacts with SRC (via SH2 and SH3 domain). Interacts with EGFR, and this interaction is dependent on EGF stimulation and kinase activity of EGFR. Interacts (via kinase domain) with AKT1. Part of a collagen stimulated complex involved in cell migration composed of CDC42, CRK, TNK2 and BCAR1/p130cas. Interacts with BCAR1/p130cas via SH3 domains. Forms complexes with GRB2 and numerous receptor tyrosine kinases (RTK) including LTK, AXL or PDGFRL, in which GRB2 promotes RTK recruitment by TNK2. Interacts with NEDD4 (via WW3 domain). NEDD4L and EGF promote association with NEDD4. The cofactor is Mg(2+). Post-translationally, autophosphorylation regulates kinase activity. Phosphorylation on Tyr-518 is required for interaction with SRC and is observed during association with clathrin-coated pits. In terms of processing, polyubiquitinated by NEDD4 and NEDD4L. Degradation can be induced by EGF and is lysosome-dependent.

It is found in the cell membrane. The protein localises to the nucleus. Its subcellular location is the endosome. The protein resides in the cell junction. It localises to the adherens junction. It is found in the cytoplasmic vesicle membrane. The protein localises to the cytoplasmic vesicle. Its subcellular location is the clathrin-coated vesicle. The protein resides in the membrane. It localises to the clathrin-coated pit. It is found in the cytoplasm. The protein localises to the cytosol. It carries out the reaction L-tyrosyl-[protein] + ATP = O-phospho-L-tyrosyl-[protein] + ADP + H(+). The catalysed reaction is L-seryl-[protein] + ATP = O-phospho-L-seryl-[protein] + ADP + H(+). It catalyses the reaction L-threonyl-[protein] + ATP = O-phospho-L-threonyl-[protein] + ADP + H(+). Non-receptor tyrosine-protein and serine/threonine-protein kinase that is implicated in cell spreading and migration, cell survival, cell growth and proliferation. Transduces extracellular signals to cytosolic and nuclear effectors. Phosphorylates AKT1, AR, MCF2, WASL and WWOX. Implicated in trafficking and clathrin-mediated endocytosis through binding to epidermal growth factor receptor (EGFR) and clathrin. Binds to both poly- and mono-ubiquitin and regulates ligand-induced degradation of EGFR, thereby contributing to the accumulation of EGFR at the limiting membrane of early endosomes. Downstream effector of CDC42 which mediates CDC42-dependent cell migration via phosphorylation of BCAR1. May be involved both in adult synaptic function and plasticity and in brain development. Activates AKT1 by phosphorylating it on 'Tyr-176'. Phosphorylates AR on 'Tyr-267' and 'Tyr-363', thereby promoting its recruitment to androgen-responsive enhancers (AREs). Phosphorylates WWOX on 'Tyr-287'. Phosphorylates MCF2, thereby enhancing its activity as a guanine nucleotide exchange factor (GEF) toward Rho family proteins. Contributes to the control of AXL receptor levels. Confers metastatic properties on cancer cells and promotes tumor growth by negatively regulating tumor suppressor such as WWOX and positively regulating pro-survival factors such as AKT1 and AR. The chain is Activated CDC42 kinase 1 from Rattus norvegicus (Rat).